Consider the following 145-residue polypeptide: Ribonuclease H (145 aa).

Positions M1 to A141 constitute an RNase H type-1 domain. The Mg(2+) site is built by D9, E47, D69, and D133.

This sequence belongs to the RNase H family. In terms of assembly, monomer. It depends on Mg(2+) as a cofactor.

It is found in the cytoplasm. The catalysed reaction is Endonucleolytic cleavage to 5'-phosphomonoester.. Its function is as follows. Endonuclease that specifically degrades the RNA of RNA-DNA hybrids. This is Ribonuclease H from Cupriavidus pinatubonensis (strain JMP 134 / LMG 1197) (Cupriavidus necator (strain JMP 134)).